Consider the following 1108-residue polypeptide: Unconventional myosin-Ie (1108 aa).

The region spanning 19-692 is the Myosin motor domain; sequence SGVDDMVLLS…SLFLLEEMRE (674 aa). Position 112-119 (112-119) interacts with ATP; sequence GESGAGKT. The tract at residues 581–591 is actin-binding; the sequence is PHYIRCIKPNE. Residues 695–724 form the IQ domain; the sequence is YDGYARVIQKSWRKFVARKKYVQMREEASD. The TH1 domain maps to 730 to 922; sequence KERRRNSINR…NKVLQVSIGP (193 aa). Residues 919-966 are disordered; sequence SIGPGLPKNSRPTRRNTTQNTGYSSGTQNANYPVRAAPPPPGYHQNGV. Residues 933–949 are compositionally biased toward polar residues; sequence RNTTQNTGYSSGTQNAN. 2 positions are modified to phosphoserine: S980 and S1002. Residues 993 to 1053 are disordered; it reads ARPPLPRQQS…KPQPKPKPQV (61 aa). Positions 999 to 1013 are enriched in polar residues; that stretch reads RQQSTSSDRVSQTPE. Over residues 1035-1052 the composition is skewed to pro residues; it reads RPPPAGGRPKPQPKPKPQ. Residues 1051 to 1108 form the SH3 domain; the sequence is PQVPQCKALYAYDAQDTDELSFNANDIIDIIKEDPSGWWTGRLRGKQGLFPNNYVTKI.

The protein belongs to the TRAFAC class myosin-kinesin ATPase superfamily. Myosin family. In terms of assembly, interacts with CALM and F-actin. Interacts (via SH3 domain) with SYNJ1, DNM1 and DNM2. Interacts with ARL14EP. Interacts with CARMIL1. Expressed in the immune system. In the kidney, predominantly expressed in the glomerulus, including podocytes.

The protein localises to the cytoplasm. Its subcellular location is the cytoskeleton. It is found in the cytoplasmic vesicle. It localises to the clathrin-coated vesicle. The protein resides in the cell junction. Actin-based motor molecule with ATPase activity. Unconventional myosins serve in intracellular movements. Their highly divergent tails bind to membranous compartments, which are then moved relative to actin filaments. Binds to membranes containing anionic phospholipids via its tail domain. Involved in clathrin-mediated endocytosis and intracellular movement of clathrin-coated vesicles. Required for normal morphology of the glomerular basement membrane, normal development of foot processes by kidney podocytes and normal kidney function. In dendritic cells, may control the movement of class II-containing cytoplasmic vesicles along the actin cytoskeleton by connecting them with the actin network via ARL14EP and ARL14. The protein is Unconventional myosin-Ie (MYO1E) of Homo sapiens (Human).